An 877-amino-acid polypeptide reads, in one-letter code: DNA (cytosine-5)-methyltransferase 3A (877 aa).

3 disordered regions span residues 1–154 (MVES…MQRH), 194–250 (EETP…PEYE), and 412–431 (AYAPPPPAKKPRKSTTEKPK). 2 stretches are compositionally biased toward basic and acidic residues: residues 107–133 (KLLEATEKSKEEKEENNFDSLKMEGSR) and 195–206 (ETPRAEPQKEEE). Residues 210-225 (PASQQPTDPASPNVAT) show a composition bias toward polar residues. Positions 226-284 (TPEPVVADAVDKNTSKSADDEPEYEDGRGLGIGELVWGKLRGFSWWPGRIVSWWMTGRS) constitute a PWWP domain. Over residues 234–244 (AVDKNTSKSAD) the composition is skewed to basic and acidic residues. Positions 447 to 579 (EVRQKCRNIE…LQMFFANNHD (133 aa)) constitute an ADD domain. A GATA-type; atypical zinc finger spans residues 458–488 (ICISCGSLNVTLEHPLFIGGMCQNCKNCFLE). The segment at 499–555 (QSYCTICCGGREVLMCGNNNCCRCFCVECVDLLVGPGAAQAAIKEDPWNCYMCGHKG) adopts a PHD-type; atypical zinc-finger fold. Residues 599-877 (IRVLSLFDGI…APLKEYFACV (279 aa)) form the SAM-dependent MTase C5-type domain. S-adenosyl-L-methionine contacts are provided by residues 606 to 610 (DGIAT), Glu629, and 651 to 653 (DVR). Residue Cys675 is part of the active site. An S-adenosyl-L-methionine-binding site is contributed by 856-858 (RSW).

The protein belongs to the class I-like SAM-binding methyltransferase superfamily. C5-methyltransferase family.

It is found in the nucleus. It localises to the chromosome. The protein localises to the cytoplasm. It carries out the reaction a 2'-deoxycytidine in DNA + S-adenosyl-L-methionine = a 5-methyl-2'-deoxycytidine in DNA + S-adenosyl-L-homocysteine + H(+). The enzyme catalyses L-cysteinyl-[protein] + S-adenosyl-L-methionine = S-methyl-L-cysteinyl-[protein] + S-adenosyl-L-homocysteine + H(+). In terms of biological role, required for genome-wide de novo methylation and is essential for development. DNA methylation is coordinated with methylation of histones. It modifies DNA in a non-processive manner and also methylates non-CpG sites. Acts as a transcriptional corepressor for ZNF238. Can actively repress transcription through the recruitment of HDAC activity. Also has weak auto-methylation activity on some Cys residue in absence of DNA. This chain is DNA (cytosine-5)-methyltransferase 3A (DNMT3A), found in Gallus gallus (Chicken).